Reading from the N-terminus, the 425-residue chain is Tyrosine--tRNA ligase (425 aa).

An L-tyrosine-binding site is contributed by tyrosine 37. Residues 42–51 (PTADSLHLGH) carry the 'HIGH' region motif. Positions 175 and 179 each coordinate L-tyrosine. The 'KMSKS' region signature appears at 235–239 (KFGKT). Lysine 238 provides a ligand contact to ATP. One can recognise an S4 RNA-binding domain in the interval 357-414 (ADLQQALVSAELVPSRGQARTMISSNAVTINGEKQANPEYIFSASDRLFDRYTLLRRG).

It belongs to the class-I aminoacyl-tRNA synthetase family. TyrS type 1 subfamily. As to quaternary structure, homodimer.

Its subcellular location is the cytoplasm. It catalyses the reaction tRNA(Tyr) + L-tyrosine + ATP = L-tyrosyl-tRNA(Tyr) + AMP + diphosphate + H(+). Its function is as follows. Catalyzes the attachment of tyrosine to tRNA(Tyr) in a two-step reaction: tyrosine is first activated by ATP to form Tyr-AMP and then transferred to the acceptor end of tRNA(Tyr). The chain is Tyrosine--tRNA ligase from Pectobacterium atrosepticum (strain SCRI 1043 / ATCC BAA-672) (Erwinia carotovora subsp. atroseptica).